Here is a 288-residue protein sequence, read N- to C-terminus: Oxaloacetate decarboxylase (288 aa).

Ser-47 lines the substrate pocket. Asp-85 contacts Mg(2+). The substrate site is built by Arg-156 and His-232.

The protein belongs to the isocitrate lyase/PEP mutase superfamily. Oxaloacetate decarboxylase family. In terms of assembly, homotetramer; dimer of dimers. The cofactor is Mg(2+).

The enzyme catalyses oxaloacetate + H(+) = pyruvate + CO2. In terms of biological role, catalyzes the decarboxylation of oxaloacetate into pyruvate. Seems to play a role in maintaining cellular concentrations of bicarbonate and pyruvate. The polypeptide is Oxaloacetate decarboxylase (Bradyrhizobium sp. (strain ORS 278)).